We begin with the raw amino-acid sequence, 335 residues long: Erlin-2-A (335 aa).

Residues 1–2 (MS) are Cytoplasmic-facing. Residues 3–23 (HAGAIVGLGVALIAAALFSAI) traverse the membrane as a helical segment. Topologically, residues 24–335 (HKIEEGHVGV…GLDEAASAEE (312 aa)) are lumenal. N-linked (GlcNAc...) asparagine glycosylation is present at asparagine 106.

This sequence belongs to the band 7/mec-2 family.

It is found in the endoplasmic reticulum membrane. Functionally, mediates the endoplasmic reticulum-associated degradation (ERAD) of inositol 1,4,5-trisphosphate receptors (IP3Rs). Promotes sterol-accelerated ERAD of HMGCR. Involved in regulation of cellular cholesterol homeostasis by regulation the SREBP signaling pathway. This Xenopus laevis (African clawed frog) protein is Erlin-2-A (erlin2-a).